Consider the following 541-residue polypeptide: Beta-glucuronidase (541 aa).

A signal peptide spans 1 to 20 (MHHHPITLLSLLLGAAQSIA). N-linked (GlcNAc...) asparagine glycans are attached at residues N69, N115, and N157. E208 functions as the Proton donor in the catalytic mechanism. N-linked (GlcNAc...) asparagine glycans are attached at residues N217, N291, and N304. The Nucleophile role is filled by E324. N-linked (GlcNAc...) asparagine glycosylation is found at N380, N426, N441, N483, and N512.

It belongs to the glycosyl hydrolase 79 family. In terms of processing, N-glycosylated.

It is found in the secreted. It catalyses the reaction a beta-D-glucuronoside + H2O = D-glucuronate + an alcohol. Functionally, beta-glucuronidase that hydrolyzes beta-glucuronosyl and 4-O-methyl-beta-glucuronosyl residues of arabinogalactan-protein. Hydrolyzed heparan sulfate only very weakly. Has no activity on xylan from birchwood. Able to catalyze the transglycosylation of glucuronic acid (GlcA) residues from p-nitrophenyl-beta-glucuronic acid (PNP beta-GlcA) to various monosaccharide acceptors such as glucose, galactose and xylose. This is Beta-glucuronidase from Aspergillus niger (strain ATCC MYA-4892 / CBS 513.88 / FGSC A1513).